A 281-amino-acid chain; its full sequence is NADPH-dependent 7-cyano-7-deazaguanine reductase (281 aa).

81–83 (IES) contributes to the substrate binding site. 83–84 (SK) contacts NADPH. The active-site Thioimide intermediate is the cysteine 188. The active-site Proton donor is aspartate 195. 227–228 (HE) is a substrate binding site. Position 256-257 (256-257 (RG)) interacts with NADPH.

This sequence belongs to the GTP cyclohydrolase I family. QueF type 2 subfamily. Homodimer.

It localises to the cytoplasm. The enzyme catalyses 7-aminomethyl-7-carbaguanine + 2 NADP(+) = 7-cyano-7-deazaguanine + 2 NADPH + 3 H(+). It participates in tRNA modification; tRNA-queuosine biosynthesis. Catalyzes the NADPH-dependent reduction of 7-cyano-7-deazaguanine (preQ0) to 7-aminomethyl-7-deazaguanine (preQ1). The protein is NADPH-dependent 7-cyano-7-deazaguanine reductase of Polaromonas naphthalenivorans (strain CJ2).